Consider the following 30-residue polypeptide: Cycloviolacin-H1 (30 aa).

The cyclopeptide (Gly-Asn) cross-link spans 1 to 30 (GIPCGESCVYIPCLTSAIGCSCKSKVCYRN). 3 disulfides stabilise this stretch: Cys-4–Cys-20, Cys-8–Cys-22, and Cys-13–Cys-27.

The protein belongs to the cyclotide family. Bracelet subfamily. This is a cyclic peptide.

Functionally, probably participates in a plant defense mechanism. This is Cycloviolacin-H1 from Viola hederacea (Australian violet).